Here is a 522-residue protein sequence, read N- to C-terminus: Wax ester synthase/diacylglycerol acyltransferase 4 (522 aa).

The segment covering 1–12 has biased composition (basic and acidic residues); the sequence is MEIETRPHISGD. Residues 1 to 20 form a disordered region; sequence MEIETRPHISGDEKEEEQPL. The Cytoplasmic portion of the chain corresponds to 1–205; that stretch reads MEIETRPHIS…SDSRLLWLVK (205 aa). The active-site Proton acceptor is the His149. A helical transmembrane segment spans residues 206-226; sequence VIWTAVILGLNTVCDALEFIV. At 227-522 the chain is on the lumenal side; sequence TTLFVKDTET…QIAGLLYRML (296 aa). N-linked (GlcNAc...) asparagine glycosylation is found at Asn270 and Asn409.

It in the N-terminal section; belongs to the long-chain O-acyltransferase family. Mostly expressed in roots, flowers and siliques.

The protein resides in the cell membrane. The protein localises to the endoplasmic reticulum membrane. It catalyses the reaction an acyl-CoA + a 1,2-diacyl-sn-glycerol = a triacyl-sn-glycerol + CoA. The enzyme catalyses a long chain fatty alcohol + a fatty acyl-CoA = a wax ester + CoA. Its pathway is glycerolipid metabolism; triacylglycerol biosynthesis. The protein operates within lipid metabolism. Functionally, bifunctional wax ester synthase/diacylglycerol acyltransferase. Involved in cuticular wax biosynthesis. The polypeptide is Wax ester synthase/diacylglycerol acyltransferase 4 (Arabidopsis thaliana (Mouse-ear cress)).